The primary structure comprises 416 residues: UDP-N-acetylglucosamine 1-carboxyvinyltransferase (416 aa).

Phosphoenolpyruvate is bound at residue 22 to 23 (KN). Arg-92 contributes to the UDP-N-acetyl-alpha-D-glucosamine binding site. Cys-116 (proton donor) is an active-site residue. Cys-116 is modified (2-(S-cysteinyl)pyruvic acid O-phosphothioketal). Residues Asp-304 and Ile-326 each coordinate UDP-N-acetyl-alpha-D-glucosamine.

It belongs to the EPSP synthase family. MurA subfamily.

Its subcellular location is the cytoplasm. The enzyme catalyses phosphoenolpyruvate + UDP-N-acetyl-alpha-D-glucosamine = UDP-N-acetyl-3-O-(1-carboxyvinyl)-alpha-D-glucosamine + phosphate. It functions in the pathway cell wall biogenesis; peptidoglycan biosynthesis. Its function is as follows. Cell wall formation. Adds enolpyruvyl to UDP-N-acetylglucosamine. This chain is UDP-N-acetylglucosamine 1-carboxyvinyltransferase, found in Solidesulfovibrio magneticus (strain ATCC 700980 / DSM 13731 / RS-1) (Desulfovibrio magneticus).